The primary structure comprises 235 residues: Sugar fermentation stimulation protein homolog (235 aa).

It belongs to the SfsA family.

The protein is Sugar fermentation stimulation protein homolog of Photorhabdus laumondii subsp. laumondii (strain DSM 15139 / CIP 105565 / TT01) (Photorhabdus luminescens subsp. laumondii).